Reading from the N-terminus, the 942-residue chain is AP-1 complex subunit beta (942 aa).

6 HEAT repeats span residues 45 to 82 (KDVS…NHPD), 117 to 154 (NITE…VNPE), 156 to 193 (VENQ…VSKK), 273 to 313 (DVIR…KRPE), 384 to 421 (RASE…KYPN), and 458 to 495 (DNAH…KRPK). The tract at residues 590–700 (GLRNKEEEDE…NDLSFLGGGG (111 aa)) is disordered. Residues 596–609 (EEDEEEPDYVDDDN) show a composition bias toward acidic residues. Low complexity-rich tracts occupy residues 613–645 (QQGG…QQQP) and 664–677 (NNNN…NNNN). The segment covering 678 to 693 (MYSPQPQQFNGNSNDL) has biased composition (polar residues).

Belongs to the adaptor complexes large subunit family. As to quaternary structure, adaptor protein complex 1 (AP-1) is a heterotetramer composed of two large adaptins (gamma-type subunit and beta-type subunit), a medium adaptin (mu-type subunit) and a small adaptin (sigma-type subunit).

It localises to the golgi apparatus. The protein resides in the trans-Golgi network. The protein localises to the cytoplasmic vesicle. It is found in the clathrin-coated vesicle membrane. In terms of biological role, subunit of clathrin-associated adaptor protein complex 1 that plays a role in protein sorting in the trans-Golgi network (TGN) and endosomes. The AP complexes mediate the recruitment of clathrin to membranes and the recognition of sorting signals within the cytosolic tails of transmembrane cargo molecules. Also involved in early steps of phagocytosis and macropinocytosis. This Dictyostelium discoideum (Social amoeba) protein is AP-1 complex subunit beta (ap1b1).